The chain runs to 298 residues: Protease HtpX (298 aa).

2 consecutive transmembrane segments (helical) span residues 4–24 (IALY…TLSL) and 41–61 (TSLL…SLLI). H147 is a binding site for Zn(2+). Residue E148 is part of the active site. A Zn(2+)-binding site is contributed by H151. 2 helical membrane-spanning segments follow: residues 162–182 (LIQG…GYVI) and 193–213 (GLGF…GIAA). A Zn(2+)-binding site is contributed by E225.

Belongs to the peptidase M48B family. Requires Zn(2+) as cofactor.

It localises to the cell inner membrane. This chain is Protease HtpX, found in Alcanivorax borkumensis (strain ATCC 700651 / DSM 11573 / NCIMB 13689 / SK2).